The sequence spans 531 residues: Large neutral amino acids transporter small subunit 2 (531 aa).

Residues 1–29 form a disordered region; the sequence is MEKGARQRNNTAKNHPGSDTSPEAEASSG. Topologically, residues 1-43 are cytoplasmic; it reads MEKGARQRNNTAKNHPGSDTSPEAEASSGGGGVALKKEIGLVS. The span at 7–21 shows a compositional bias: polar residues; sequence QRNNTAKNHPGSDTS. 4 positions are modified to phosphoserine: S18, S21, S27, and S28. Residues 44-64 traverse the membrane as a helical segment; the sequence is ACGIIVGNIIGSGIFVSPKGV. Residue I52 coordinates L-leucine. At 65-72 the chain is on the extracellular side; it reads LENAGSVG. A helical membrane pass occupies residues 73-94; it reads LALIVWIVTGIITAVGALCYAE. The Cytoplasmic portion of the chain corresponds to 95 to 115; it reads LGVTIPKSGGDYSYVKDIFGG. Residues 116–148 traverse the membrane as a helical segment; it reads LAGFLRLWIAVLVIYPTNQAVIALTFSNYVLQP. N133 is a binding site for L-tryptophan. Residues 149–156 lie on the Extracellular side of the membrane; that stretch reads LFPTCFPP. The helical transmembrane segment at 157-177 threads the bilayer; it reads ESGLRLLAAICLLLLTWVNCS. Over 178–180 the chain is Cytoplasmic; sequence SVR. A helical membrane pass occupies residues 181-209; it reads WATRVQDIFTAGKLLALALIIIMGIVQIC. Residues 210 to 229 are Extracellular-facing; it reads KGEFFWLEPKNAFENFQEPD. Residues 230 to 251 form a helical membrane-spanning segment; it reads IGLVALAFLQGSFAYGGWNFLN. G245 is a binding site for L-leucine. The Cytoplasmic portion of the chain corresponds to 252–264; the sequence is YVTEELVDPYKNL. The chain crosses the membrane as a helical span at residues 265-286; it reads PRAIFISIPLVTFVYVFANIAY. Residues 287–311 are Extracellular-facing; the sequence is VTAMSPQELLASNAVAVTFGEKLLG. A helical membrane pass occupies residues 312-337; it reads VMAWIMPISVALSTFGGVNGSLFTSS. Over 338–363 the chain is Cytoplasmic; that stretch reads RLFFAGAREGHLPSVLAMIHVKRCTP. Residues 364-381 traverse the membrane as a helical segment; that stretch reads IPALLFTCLSTLLMLVTS. Residues 382–385 are Extracellular-facing; that stretch reads DMYT. Residues 386–407 form a helical membrane-spanning segment; the sequence is LINYVGFINYLFYGVTVAGQIV. An L-tryptophan-binding site is contributed by N394. Residues 408–422 lie on the Cytoplasmic side of the membrane; it reads LRWKKPDIPRPIKVS. 2 consecutive transmembrane segments (helical) span residues 423–445 and 446–465; these read LLFPIIYLLFWAFLLIFSLWSEP and VVCGIGLAIMLTGVPVYFLG. The Cytoplasmic segment spans residues 466–531; it reads VYWQHKPKCF…VKDPDSEEQP (66 aa). The interval 499–531 is disordered; that stretch reads NSGAEETTDDLEEQHKPIFKPTPVKDPDSEEQP. S527 carries the post-translational modification Phosphoserine.

Belongs to the amino acid-polyamine-organocation (APC) superfamily. L-type amino acid transporter (LAT) (TC 2.A.3.8) family. Disulfide-linked heterodimer composed of the catalytic light chain subunit SLC7A8 and the heavy chain subunit SLC3A2. SLC3A2 acts as a chaperone for correct plasma membrane trafficking and stabilization of SLC7A8 and modulates the substrate affinity and specificity of SLC7A8. ICAM-1 associates with the heterodimer SLC3A2/SLC7A8; facilitates leucine uptake. In terms of tissue distribution, strongly expressed in kidney and small intestine. Moderately present in placenta, ovary and brain. Expressed in the inner ear.

The protein resides in the cell membrane. It is found in the basolateral cell membrane. It catalyses the reaction L-histidine(in) + L-phenylalanine(out) = L-histidine(out) + L-phenylalanine(in). The enzyme catalyses L-tryptophan(in) + L-phenylalanine(out) = L-tryptophan(out) + L-phenylalanine(in). It carries out the reaction L-isoleucine(in) + L-phenylalanine(out) = L-isoleucine(out) + L-phenylalanine(in). The catalysed reaction is L-valine(in) + L-phenylalanine(out) = L-valine(out) + L-phenylalanine(in). It catalyses the reaction L-leucine(in) + L-phenylalanine(out) = L-leucine(out) + L-phenylalanine(in). The enzyme catalyses L-glutamine(in) + L-phenylalanine(out) = L-glutamine(out) + L-phenylalanine(in). It carries out the reaction L-cysteine(in) + L-phenylalanine(out) = L-cysteine(out) + L-phenylalanine(in). The catalysed reaction is L-phenylalanine(out) + L-methionine(in) = L-phenylalanine(in) + L-methionine(out). It catalyses the reaction L-leucine(out) + L-methionine(in) = L-leucine(in) + L-methionine(out). The enzyme catalyses L-cysteine(out) + L-methionine(in) = L-cysteine(in) + L-methionine(out). It carries out the reaction S-methylmercury-L-cysteine(out) + L-methionine(in) = S-methylmercury-L-cysteine(in) + L-methionine(out). The catalysed reaction is S-methylmercury-L-cysteine(in) + L-leucine(out) = S-methylmercury-L-cysteine(out) + L-leucine(in). It catalyses the reaction S-methylmercury-L-cysteine(in) + L-phenylalanine(out) = S-methylmercury-L-cysteine(out) + L-phenylalanine(in). The enzyme catalyses L-phenylalanine(out) + L-serine(in) = L-phenylalanine(in) + L-serine(out). It carries out the reaction L-phenylalanine(out) + glycine(in) = L-phenylalanine(in) + glycine(out). The catalysed reaction is L-phenylalanine(out) + L-alanine(in) = L-phenylalanine(in) + L-alanine(out). It catalyses the reaction L-tryptophan(in) = L-tryptophan(out). The enzyme catalyses 3,3',5-triiodo-L-thyronine(out) = 3,3',5-triiodo-L-thyronine(in). It carries out the reaction 3,3'-diiodo-L-thyronine(out) = 3,3'-diiodo-L-thyronine(in). The catalysed reaction is L-dopa(out) + L-phenylalanine(in) = L-dopa(in) + L-phenylalanine(out). In terms of biological role, associates with SLC3A2 to form a functional heterodimeric complex that translocates small and large neutral amino acids with broad specificity and a stoichiometry of 1:1. Functions as amino acid antiporter mediating the influx of extracellular essential amino acids mainly in exchange with the efflux of highly concentrated intracellular amino acids. Has relatively symmetrical selectivities but strongly asymmetrical substrate affinities at both the intracellular and extracellular sides of the transporter. This asymmetry allows SLC7A8 to regulate intracellular amino acid pools (mM concentrations) by exchange with external amino acids (uM concentration range), equilibrating the relative concentrations of different amino acids across the plasma membrane instead of mediating their net uptake. May play an essential role in the reabsorption of neutral amino acids from the epithelial cells to the bloodstream in the kidney. Involved in the uptake of methylmercury (MeHg) when administered as the L-cysteine or D,L-homocysteine complexes, and hence plays a role in metal ion homeostasis and toxicity. Involved in the cellular activity of small molecular weight nitrosothiols, via the stereoselective transport of L-nitrosocysteine (L-CNSO) across the transmembrane. Imports the thyroid hormone diiodothyronine (T2) and to a smaller extent triiodothyronine (T3) but not rT 3 or thyroxine (T4). Mediates the uptake of L-DOPA. May participate in auditory function. The sequence is that of Large neutral amino acids transporter small subunit 2 (Slc7a8) from Mus musculus (Mouse).